Reading from the N-terminus, the 382-residue chain is 2-carboxy-1,4-naphthoquinone phytyltransferase, chloroplastic (382 aa).

The transit peptide at 1–66 (MVNFVSLCDI…RRNLRVRPIF (66 aa)) directs the protein to the chloroplast. Helical transmembrane passes span 99–119 (VALVPLTVGASAAYLETGLFL), 123–143 (YVTLLLSSILIITWLNLSNDV), 168–188 (TLAAAITSLALGVSGLVWTSL), 196–216 (ILLLASAILCGYVYQCPPFRL), 224–244 (PLCFAAFGPFATTAFYLLLGS), 257–277 (VLSSSVLVGFTTSLILFCSHF), 323–343 (ILPLPCTLMCFLTLPVGNLVS), and 361–381 (YYCVRLHALLGAALSLGLVIA).

Belongs to the MenA family. Type 2 subfamily.

The protein localises to the plastid. It is found in the chloroplast membrane. It catalyses the reaction 2-carboxy-1,4-naphthoquinone + phytyl diphosphate + H(+) = demethylphylloquinone + CO2 + diphosphate. Functionally, involved in the synthesis of phylloquinone (vitamin K1). Catalyzes the transfer of a prenyl chain to 2-carboxy-1,4-naphthoquinone. The sequence is that of 2-carboxy-1,4-naphthoquinone phytyltransferase, chloroplastic (ABC4) from Arabidopsis thaliana (Mouse-ear cress).